Consider the following 984-residue polypeptide: Ephrin type-B receptor 1 (984 aa).

The Eph LBD domain occupies 1 to 182; that stretch reads ETLMDTRTAT…FFKKCPSVVQ (182 aa). Residues 1–541 lie on the Extracellular side of the membrane; sequence ETLMDTRTAT…KSELREQLPL (541 aa). Fibronectin type-III domains are found at residues 303–413 and 414–528; these read VPSG…TNQA and APST…TLTD. N-linked (GlcNAc...) asparagine glycans are attached at residues Asn315, Asn407, and Asn480. A helical membrane pass occupies residues 542–562; sequence IAGSAAAGVVFIVSLVAISIV. The Cytoplasmic portion of the chain corresponds to 563-984; sequence CSRKRAYSKE…QMSQSPTSMA (422 aa). The 264-residue stretch at 619-882 folds into the Protein kinase domain; it reads VKIEEVIGAG…EIVNTLDKMI (264 aa). Residues 625–633 and Lys651 each bind ATP; that span reads IGAGEFGEV. The active-site Proton acceptor is the Asp744. The 65-residue stretch at 911-975 folds into the SAM domain; sequence TAFTSVEDWL…LNSIQSMRVQ (65 aa). Residues 982-984 carry the PDZ-binding motif; it reads SMA.

Belongs to the protein kinase superfamily. Tyr protein kinase family. Ephrin receptor subfamily. Heterotetramer upon binding of the ligand. The heterotetramer is composed of an ephrin dimer and a receptor dimer. Oligomerization is probably required to induce biological responses. In terms of processing, phosphorylated. Autophosphorylation is stimulated by ligands. Expressed at high levels in the 10-day embryo, and in adult brain, lung, heart and skeletal muscle. Low levels of expression detected in all other adult tissues tested.

It localises to the cell membrane. The protein localises to the early endosome membrane. Its subcellular location is the cell projection. The protein resides in the dendrite. The catalysed reaction is L-tyrosyl-[protein] + ATP = O-phospho-L-tyrosyl-[protein] + ADP + H(+). In terms of biological role, receptor tyrosine kinase which binds promiscuously transmembrane ephrin-B family ligands residing on adjacent cells, leading to contact-dependent bidirectional signaling into neighboring cells. The signaling pathway downstream of the receptor is referred to as forward signaling while the signaling pathway downstream of the ephrin ligand is referred to as reverse signaling. May play a role in axon guidance during nervous system development. May also play an important redundant role with other ephrin-B receptors in development and maturation of dendritic spines and synapse formation. More generally, may play a role in targeted cell migration and adhesion. Upon activation by ephrin-B ligands activates the MAPK/ERK and the JNK signaling cascades to regulate cell migration and adhesion respectively. This is Ephrin type-B receptor 1 (EPHB1) from Gallus gallus (Chicken).